The chain runs to 355 residues: Cyanide hydratase (355 aa).

A CN hydrolase domain is found at 6–285 (YKAAAVTSEP…DGLLFVDIDL (280 aa)). The active-site Proton acceptor is glutamate 46. The active site involves lysine 128. Cysteine 163 serves as the catalytic Nucleophile.

The protein belongs to the carbon-nitrogen hydrolase superfamily. Nitrilase family. In terms of assembly, oligomer of dimers, forming left-handed helical fibers.

It carries out the reaction formamide = hydrogen cyanide + H2O. In terms of biological role, catalyzes the hydration of cyanide to formamide. Degradation of cyanide may be important for plant pathogenic fungi in infection of cyanogenic plants. The sequence is that of Cyanide hydratase from Gibberella zeae (strain ATCC MYA-4620 / CBS 123657 / FGSC 9075 / NRRL 31084 / PH-1) (Wheat head blight fungus).